Consider the following 1031-residue polypeptide: Ookinete maturation protein 1 (1031 aa).

3 disordered regions span residues H125 to E184, K340 to R405, and D609 to I697. Residues Q141 to S168 show a composition bias toward basic residues. A compositionally biased stretch (polar residues) spans S171–T180. Over residues K340–E357 the composition is skewed to basic and acidic residues. Residues L377–K394 are compositionally biased toward polar residues. The stretch at I581–K646 forms a coiled coil. Residues A610–V648 show a composition bias toward basic and acidic residues. Basic residues predominate over residues L649–Q659. The span at R660–K686 shows a compositional bias: basic and acidic residues.

Functionally, in the mosquito vector midgut, plays a role in ookinete development. The protein is Ookinete maturation protein 1 of Plasmodium berghei (strain Anka).